Here is a 337-residue protein sequence, read N- to C-terminus: Palmitoyltransferase ZDHHC15 (337 aa).

Over 1 to 20 (MRRGWKMALSGGLRCCRRVL) the chain is Cytoplasmic. The chain crosses the membrane as a helical span at residues 21–41 (SWVPVLVIVLVVLWSYYAYVF). At 42–56 (ELCLVTVLSPAEKVI) the chain is on the lumenal side. Residues 57 to 77 (YLILYHAIFVFFAWTYWKSIF) traverse the membrane as a helical segment. The Cytoplasmic segment spans residues 78–172 (TLPQQPNQKF…NNCIGFSNYK (95 aa)). Positions 129–179 (RFCDRCHLIKPDRCHHCSVCAMCVLKMDHHCPWVNNCIGFSNYKFFLQFLA) constitute a DHHC domain. Cys-131, Cys-134, His-144, Cys-145, Cys-148, Cys-151, and His-158 together coordinate Zn(2+). Cys-159 (S-palmitoyl cysteine intermediate) is an active-site residue. Cys-165 is a Zn(2+) binding site. Residues 173 to 193 (FFLQFLAYSVLYCLYIATTVF) form a helical membrane-spanning segment. At 194-210 (SYFIKYWRGELPSVRSK) the chain is on the lumenal side. A helical membrane pass occupies residues 211 to 234 (FHVLFLLFVACMFFVSLVILFGYH). Over 235-337 (CWLVSRNKTT…SSSLAVESET (103 aa)) the chain is Cytoplasmic. The disordered stretch occupies residues 293-337 (HSFPMRSMNESQNPLLANEEPWEDNEDDSRDYPEGSSSLAVESET). Acidic residues predominate over residues 312 to 321 (EPWEDNEDDS). Over residues 327–337 (GSSSLAVESET) the composition is skewed to polar residues.

This sequence belongs to the DHHC palmitoyltransferase family. Post-translationally, autopalmitoylated (in vitro). Expressed mainly in brain.

The protein resides in the golgi apparatus membrane. The protein localises to the postsynaptic density. It catalyses the reaction L-cysteinyl-[protein] + hexadecanoyl-CoA = S-hexadecanoyl-L-cysteinyl-[protein] + CoA. It carries out the reaction L-cysteinyl-[protein] + tetradecanoyl-CoA = S-tetradecanoyl-L-cysteinyl-[protein] + CoA. The enzyme catalyses L-cysteinyl-[protein] + octadecanoyl-CoA = S-octadecanoyl-L-cysteinyl-[protein] + CoA. Its activity is regulated as follows. Inhibited by 2-bromopalmitate. In terms of biological role, palmitoyltransferase that catalyzes the addition of palmitate onto various protein substrates. Has no stringent fatty acid selectivity and in addition to palmitate can also transfer onto target proteins myristate from tetradecanoyl-CoA and stearate from octadecanoyl-CoA. Palmitoylates IGF2R and SORT1, promoting their partitioning to an endosomal membrane subdomain where they can interact with the retromer cargo-selective complex. Thereby, regulates retrograde transport from endosomes to the Golgi apparatus of these lysosomal sorting receptors and plays a role in trafficking of lysosomal proteins. In the nervous system, catalyzes the palmitoylation of DLG4/PSD95 and regulates its synaptic clustering and function in synaptogenesis. Could be involved in the differentiation of dopaminergic neurons and the development of the diencephalon. Could also catalyze the palmitoylation of GAP43. Could also palmitoylate DNAJC5 and regulate its localization to the Golgi membrane. Could also palmitoylate FYN as shown in vitro. May palmitoylate CALHM3 subunit of gustatory voltage-gated ion channels and modulate channel gating and kinetics. In Mus musculus (Mouse), this protein is Palmitoyltransferase ZDHHC15.